Consider the following 301-residue polypeptide: Probable aspartoacylase (301 aa).

Zn(2+) contacts are provided by H13 and E16. Residues R54 and 61 to 62 (NR) contribute to the substrate site. Residue H105 coordinates Zn(2+). Substrate is bound by residues E163 and Y273.

This sequence belongs to the AspA/AstE family. Aspartoacylase subfamily. Requires Zn(2+) as cofactor.

The catalysed reaction is an N-acyl-L-aspartate + H2O = a carboxylate + L-aspartate. This is Probable aspartoacylase from Prochlorococcus marinus (strain MIT 9215).